Reading from the N-terminus, the 261-residue chain is 4-phosphopantoate--beta-alanine ligase (261 aa).

ATP contacts are provided by residues R17, R39, 181–182 (DL), 187–188 (RS), and 199–200 (NI).

Belongs to the archaeal phosphopantothenate synthetase family. As to quaternary structure, homodimer.

It catalyses the reaction (R)-4-phosphopantoate + beta-alanine + ATP = (R)-4'-phosphopantothenate + AMP + diphosphate + H(+). Its pathway is cofactor biosynthesis; coenzyme A biosynthesis. Functionally, catalyzes the condensation of (R)-4-phosphopantoate and beta-alanine to 4'-phosphopantothenate in the CoA biosynthesis pathway. This chain is 4-phosphopantoate--beta-alanine ligase, found in Thermococcus onnurineus (strain NA1).